The chain runs to 147 residues: DNA base-flipping protein (147 aa).

The protein belongs to the MGMT family. ATL subfamily. Interacts with several proteins, including UvrA, UvrD and the three subunits of the RNA polymerase.

Its function is as follows. Involved in DNA damage recognition. Binds DNA containing O(6)-methylguanine and larger O(6)-alkylguanine adducts. Binds to the damaged base and flips the base out of the DNA duplex into an extrahelical conformation, which allows processing by repair proteins. Also affects the regulation of gene expression in response to alkylation. This chain is DNA base-flipping protein, found in Thermus thermophilus (strain ATCC 27634 / DSM 579 / HB8).